Reading from the N-terminus, the 443-residue chain is Transcriptional adapter 2-alpha (443 aa).

Pro-6 is modified (phosphoserine; in variant Ser-6). The segment at 12 to 69 adopts a ZZ-type zinc-finger fold; the sequence is SDKPPCRGCSSYLMEPYIKCAECGPPPFFLCLQCFTRGFEYKKHQSDHTYEIMTSDFP. Cys-17, Cys-20, Cys-31, Cys-34, Cys-42, Cys-45, His-55, and His-59 together coordinate Zn(2+). In terms of domain architecture, SANT spans 70–122; it reads VLDPSWTAQEEMALLEAVMDCGFGNWQDVANQMCTKTKEECEKHYMKHFINNP. Residues Lys-132 and Lys-138 each participate in a glycyl lysine isopeptide (Lys-Gly) (interchain with G-Cter in SUMO2) cross-link. The segment at 348–372 is disordered; the sequence is SPSIPMASNSGRRSAPPLNLTGLPG. The SWIRM domain maps to 356–443; the sequence is NSGRRSAPPL…LIREGYITKG (88 aa). Residues 426 to 435 mediate DNA binding; the sequence is KTRKIYDFLI.

As to quaternary structure, interacts with GCN5 and NR3C1. Associated with the P/CAF protein in the PCAF complex. Component of the PCAF complex, at least composed of TADA2L/ADA2, TADA3L/ADA3, TAF5L/PAF65-beta, TAF6L/PAF65-alpha, TAF10/TAFII30, TAF12/TAFII20, TAF9/TAFII31 and TRRAP. Component of the ADA2A-containing complex (ATAC), composed of KAT14, KAT2A, TADA2L, TADA3L, ZZ3, MBIP, WDR5, YEATS2, CCDC101 and DR1. Interacts with CCDC134. Expressed in all tissues, but most abundantly in testis.

It is found in the nucleus. Its subcellular location is the chromosome. In terms of biological role, component of the ATAC complex, a complex with histone acetyltransferase activity on histones H3 and H4. Required for the function of some acidic activation domains, which activate transcription from a distant site. Binds double-stranded DNA. Binds dinucleosomes, probably at the linker region between neighboring nucleosomes. Plays a role in chromatin remodeling. May promote TP53/p53 'Lys-321' acetylation, leading to reduced TP53 stability and transcriptional activity. May also promote XRCC6 acetylation thus facilitating cell apoptosis in response to DNA damage. The polypeptide is Transcriptional adapter 2-alpha (TADA2A) (Homo sapiens (Human)).